Consider the following 421-residue polypeptide: MGRIGILGAGLAGLAAATKLAEAGENVTVFEARNRPGGRVWSETLDTPKGSYVIERGAEFVLDGYTSMRRLLSQFGLSLVDTGMSYYVREPGDTTGITCDDIIRTGREALELASGSGLQGTAEELLAKLPDEPELVDALRARIEISTAVSASEVTARSLQHIASFEPKPSWRVAGGNQRLPDAMAAALGSAVRYGETVRAVENISDGGVLVTTDTDTSVFDTVVVALPLAVIRDSQLNLPTTEARDAALKHVLQGHAAKLHLPLETQPATSAVMSVEGRYWTWTATDESGAVAPVLNAFMGSPSAITRANLKQRPAEWVAKARALRTDLAIPQDAAALTTVWSEDQLAGGAYAAHAPGVTAAGTALLEKPVGDVFWAGEYSEPEFVGLMEGAIRSGERAAGRVMQRLETKSGNSDSERSKA.

Residues E31, R33, R39, and E379 each contribute to the FAD site.

It belongs to the flavin monoamine oxidase family. Monomer. It depends on FAD as a cofactor.

The catalysed reaction is 4-(methylamino)butanoate + O2 + H2O = succinate semialdehyde + methylamine + H2O2. Its pathway is alkaloid degradation; nicotine degradation. In terms of biological role, catalyzes the removal of methylamine from 4-methylaminobutanoate with the formation of succinate semialdehyde. Is involved in the catabolism of 4-methylaminobutanoate produced from nicotine. Has a very weak monoamine oxidase activity with 4-aminobutanoate. Cannot use spermidine, spermine, sarcosine, dimethylglycine, glycine, choline, betaine, alpha-methylamino isobutyrate, methylamine propionitrile and methylamino propylamine as substrate. The chain is 4-methylaminobutanoate oxidase (methylamine-forming) (mao) from Paenarthrobacter nicotinovorans (Arthrobacter nicotinovorans).